Reading from the N-terminus, the 353-residue chain is Protein RecA (353 aa).

Residue 74–81 (GPESSGKT) coordinates ATP.

It belongs to the RecA family.

The protein resides in the cytoplasm. Functionally, can catalyze the hydrolysis of ATP in the presence of single-stranded DNA, the ATP-dependent uptake of single-stranded DNA by duplex DNA, and the ATP-dependent hybridization of homologous single-stranded DNAs. It interacts with LexA causing its activation and leading to its autocatalytic cleavage. The chain is Protein RecA from Bordetella bronchiseptica (strain ATCC BAA-588 / NCTC 13252 / RB50) (Alcaligenes bronchisepticus).